The sequence spans 145 residues: MFHHSLAAAAAALLALAAPGFAATHEVHMLNKGESGAMVFEPAFVRAEPGDVINFVPTDKSHNVEAIKEILPEGVESFKSKINESYTLTVTEPGLYGVKCTPHFGMGMVGLVQVGDAPENLDAAKTAKMPKKARERMDAELAQVN.

An N-terminal signal peptide occupies residues 1 to 22 (MFHHSLAAAAAALLALAAPGFA). The Plastocyanin-like domain maps to 27 to 115 (VHMLNKGESG…MGMVGLVQVG (89 aa)). Residues His-62, Cys-100, His-103, and Met-108 each coordinate Cu cation. Residues 126–145 (TAKMPKKARERMDAELAQVN) are disordered.

As to quaternary structure, homodimer. The cofactor is Cu cation.

The protein resides in the periplasm. This soluble electron transfer copper protein is required for the inactivation of copper-containing nitrite reductase in the presence of oxygen. In Paracoccus pantotrophus (Thiosphaera pantotropha), this protein is Pseudoazurin (pazS).